The primary structure comprises 393 residues: Putative mitochondrial cysteine synthase (393 aa).

Residues 12–31 (LAWRECISIASVLIGAYASY) form a helical membrane-spanning segment. Lys-86 bears the N6-(pyridoxal phosphate)lysine mark. Pyridoxal 5'-phosphate contacts are provided by residues 230 to 234 (GTGGT) and Ser-338.

The protein belongs to the cysteine synthase/cystathionine beta-synthase family. Pyridoxal 5'-phosphate serves as cofactor.

The protein localises to the mitochondrion. It is found in the mitochondrion outer membrane. The enzyme catalyses O-acetyl-L-serine + hydrogen sulfide = L-cysteine + acetate. Its function is as follows. Putative cysteine synthase that catalyzes the conversion of O-acetyl-L-serine (OAS) into cysteine, the last step in the cysteine biosynthesis pathway. However, this CS-like protein is unlikely to function in cysteine biosynthesis. It seems that in S.cerevisiae cysteine biosynthesis occurs exclusively through the cystathionine pathway and not via direct incorporation of sulfur into OAS. The sequence is that of Putative mitochondrial cysteine synthase from Saccharomyces cerevisiae (strain ATCC 204508 / S288c) (Baker's yeast).